Consider the following 332-residue polypeptide: Glycerol-3-phosphate dehydrogenase [NAD(P)+] (332 aa).

The NADPH site is built by Ser-10, Trp-11, His-31, Arg-32, and Lys-105. Sn-glycerol 3-phosphate contacts are provided by Lys-105, Gly-136, and Ser-138. NADPH is bound at residue Ala-140. The sn-glycerol 3-phosphate site is built by Lys-191, Asp-244, Ser-254, Arg-255, and Asn-256. Residue Lys-191 is the Proton acceptor of the active site. Arg-255 is an NADPH binding site. Positions 279 and 281 each coordinate NADPH.

This sequence belongs to the NAD-dependent glycerol-3-phosphate dehydrogenase family.

Its subcellular location is the cytoplasm. The enzyme catalyses sn-glycerol 3-phosphate + NAD(+) = dihydroxyacetone phosphate + NADH + H(+). The catalysed reaction is sn-glycerol 3-phosphate + NADP(+) = dihydroxyacetone phosphate + NADPH + H(+). The protein operates within membrane lipid metabolism; glycerophospholipid metabolism. Catalyzes the reduction of the glycolytic intermediate dihydroxyacetone phosphate (DHAP) to sn-glycerol 3-phosphate (G3P), the key precursor for phospholipid synthesis. The polypeptide is Glycerol-3-phosphate dehydrogenase [NAD(P)+] (Prosthecochloris aestuarii (strain DSM 271 / SK 413)).